Reading from the N-terminus, the 215-residue chain is 16S rRNA (adenine(1408)-N(1))-methyltransferase (215 aa).

S-adenosyl-L-methionine-binding positions include Gly32, Asp55, 87–88, 102–107, and 191–193; these read AE, LMPWGS, and TSW.

Belongs to the methyltransferase superfamily. Kanamycin-apramycin resistance family.

It catalyses the reaction adenosine(1408) in 16S rRNA + S-adenosyl-L-methionine = N(1)-methyladenosine(1408) in 16S rRNA + S-adenosyl-L-homocysteine + H(+). Its function is as follows. Specifically methylates the N(1) position of adenine 1408 in 16S rRNA. Confers resistance to various aminoglycosides, including kanamycin, neomycin and apramycin. The protein is 16S rRNA (adenine(1408)-N(1))-methyltransferase (kamB) of Streptoalloteichus tenebrarius (strain ATCC 17920 / DSM 40477 / JCM 4838 / CBS 697.72 / NBRC 16177 / NCIMB 11028 / NRRL B-12390 / A12253. 1 / ISP 5477) (Streptomyces tenebrarius).